A 358-amino-acid chain; its full sequence is Low-specificity L-threonine aldolase 1 (358 aa).

At K207 the chain carries N6-(pyridoxal phosphate)lysine.

This sequence belongs to the threonine aldolase family. The cofactor is pyridoxal 5'-phosphate. Expressed in root tips, seedlings, carpels and seeds.

It catalyses the reaction L-threonine = acetaldehyde + glycine. The catalysed reaction is L-allo-threonine = acetaldehyde + glycine. It functions in the pathway amino-acid degradation; L-threonine degradation via aldolase pathway; acetaldehyde and glycine from L-threonine: step 1/1. Its function is as follows. Threonine aldolase involved in threonine degradation to glycine. May play a role in the removal of L-allo-threonine. The protein is Low-specificity L-threonine aldolase 1 of Arabidopsis thaliana (Mouse-ear cress).